The following is a 408-amino-acid chain: LL-diaminopimelate aminotransferase (408 aa).

Positions 15 and 42 each coordinate substrate. Pyridoxal 5'-phosphate is bound by residues Tyr-72, 108 to 109 (SK), Tyr-132, Asn-187, Tyr-218, and 246 to 248 (SFS). 3 residues coordinate substrate: Lys-109, Tyr-132, and Asn-187. An N6-(pyridoxal phosphate)lysine modification is found at Lys-249. Pyridoxal 5'-phosphate contacts are provided by Arg-257 and Asn-292. Substrate is bound by residues Asn-292 and Arg-388.

Belongs to the class-I pyridoxal-phosphate-dependent aminotransferase family. LL-diaminopimelate aminotransferase subfamily. In terms of assembly, homodimer. The cofactor is pyridoxal 5'-phosphate.

It catalyses the reaction (2S,6S)-2,6-diaminopimelate + 2-oxoglutarate = (S)-2,3,4,5-tetrahydrodipicolinate + L-glutamate + H2O + H(+). It participates in amino-acid biosynthesis; L-lysine biosynthesis via DAP pathway; LL-2,6-diaminopimelate from (S)-tetrahydrodipicolinate (aminotransferase route): step 1/1. Involved in the synthesis of meso-diaminopimelate (m-DAP or DL-DAP), required for both lysine and peptidoglycan biosynthesis. Catalyzes the direct conversion of tetrahydrodipicolinate to LL-diaminopimelate. In Prochlorococcus marinus (strain SARG / CCMP1375 / SS120), this protein is LL-diaminopimelate aminotransferase.